The primary structure comprises 421 residues: Polygalacturonase (421 aa).

Residues 1 to 20 (MKFSTAIIVSFLFIADFCAA) form the signal peptide. Residues N156 and N180 are each glycosylated (N-linked (GlcNAc...) asparagine). 2 PbH1 repeats span residues 178–204 (CKNI…HMGK) and 205–226 (STDV…SIGD). Residue D219 is the Proton donor of the active site. H242 is a catalytic residue. 2 PbH1 repeats span residues 258–279 (VEGI…RIKT) and 289–310 (VSDI…IIDQ). N265 carries an N-linked (GlcNAc...) asparagine glycan. The tract at residues 394 to 421 (PGAPAASTTATPAASKTATPAAGKSPAK) is disordered.

It belongs to the glycosyl hydrolase 28 family. As to expression, pollen specific.

It is found in the secreted. It localises to the cell wall. It carries out the reaction (1,4-alpha-D-galacturonosyl)n+m + H2O = (1,4-alpha-D-galacturonosyl)n + (1,4-alpha-D-galacturonosyl)m.. In terms of biological role, may function in the depolymerization of the pectin in its walls during pollen tube elongation, or in that of the pistil during pollination. This Medicago sativa (Alfalfa) protein is Polygalacturonase.